A 360-amino-acid polypeptide reads, in one-letter code: Phosphoserine aminotransferase (360 aa).

R41 contacts L-glutamate. Residues W101, T152, D172, and Q195 each contribute to the pyridoxal 5'-phosphate site. K196 carries the N6-(pyridoxal phosphate)lysine modification. 237–238 (NT) is a binding site for pyridoxal 5'-phosphate.

Belongs to the class-V pyridoxal-phosphate-dependent aminotransferase family. SerC subfamily. Homodimer. It depends on pyridoxal 5'-phosphate as a cofactor.

It localises to the cytoplasm. The enzyme catalyses O-phospho-L-serine + 2-oxoglutarate = 3-phosphooxypyruvate + L-glutamate. It carries out the reaction 4-(phosphooxy)-L-threonine + 2-oxoglutarate = (R)-3-hydroxy-2-oxo-4-phosphooxybutanoate + L-glutamate. Its pathway is amino-acid biosynthesis; L-serine biosynthesis; L-serine from 3-phospho-D-glycerate: step 2/3. It functions in the pathway cofactor biosynthesis; pyridoxine 5'-phosphate biosynthesis; pyridoxine 5'-phosphate from D-erythrose 4-phosphate: step 3/5. Functionally, catalyzes the reversible conversion of 3-phosphohydroxypyruvate to phosphoserine and of 3-hydroxy-2-oxo-4-phosphonooxybutanoate to phosphohydroxythreonine. The chain is Phosphoserine aminotransferase from Paraburkholderia phytofirmans (strain DSM 17436 / LMG 22146 / PsJN) (Burkholderia phytofirmans).